The sequence spans 1247 residues: Structural polyprotein (1247 aa).

A host transcription inhibition region spans residues arginine 36–lysine 67. Positions leucine 53–arginine 103 are disordered. 2 stretches are compositionally biased toward basic residues: residues lysine 59 to glutamine 71 and asparagine 81 to arginine 100. The Nuclear localization signal signature appears at proline 60–proline 98. Residues lysine 83–isoleucine 113 form a binding to the viral RNA region. Residues proline 98–cysteine 112 form a ribosome-binding region. Cysteine 112 and cysteine 127 are oxidised to a cystine. One can recognise a Peptidase S3 domain in the interval cysteine 112–tryptophan 260. Histidine 138 (charge relay system) is an active-site residue. The Nuclear export signal motif lies at isoleucine 143–phenylalanine 153. The interval lysine 154–tyrosine 159 is interaction with spike glycoprotein E2. Aspartate 160 serves as the catalytic Charge relay system. The tract at residues proline 182–alanine 192 is dimerization of the capsid protein. Serine 212 acts as the Charge relay system in catalysis. The tract at residues aspartate 218–arginine 222 is dimerization of the capsid protein. The functions as an uncleaved signal peptide for the precursor of protein E3/E2 stretch occupies residues serine 261–threonine 273. Cystine bridges form between cysteine 268-cysteine 277, cysteine 282-cysteine 286, cysteine 285-cysteine 317, cysteine 343-cysteine 449, cysteine 346-cysteine 352, cysteine 415-cysteine 429, cysteine 477-cysteine 590, cysteine 525-cysteine 549, and cysteine 527-cysteine 544. An N-linked (GlcNAc...) asparagine; by host glycan is attached at asparagine 272. Topologically, residues asparagine 325–threonine 691 are extracellular. Asparagine 587 is a glycosylation site (N-linked (GlcNAc...) asparagine; by host). Residues isoleucine 692–methionine 712 form a helical membrane-spanning segment. The Cytoplasmic segment spans residues cysteine 713–alanine 747. The tract at residues cysteine 715 to arginine 719 is interaction with the capsid protein. S-palmitoyl cysteine; by host attachment occurs at residues cysteine 720, cysteine 740, and cysteine 741. The tract at residues cysteine 720–cysteine 740 is transient transmembrane before p62-6K protein processing. Cysteine 720 and cysteine 741 form a disulfide bridge. Over alanine 748–glutamine 762 the chain is Extracellular. The helical transmembrane segment at proline 763–leucine 783 threads the bilayer. Residues lysine 784–proline 787 lie on the Cytoplasmic side of the membrane. The chain crosses the membrane as a helical span at residues cysteine 788 to alanine 808. At tyrosine 809–glycine 1223 the chain is on the extracellular side. 4 disulfide bridges follow: cysteine 857/cysteine 922, cysteine 870/cysteine 902, cysteine 871/cysteine 904, and cysteine 876/cysteine 886. Residues valine 892 to threonine 909 are E1 fusion peptide loop. N-linked (GlcNAc...) asparagine; by host glycans are attached at residues asparagine 949 and asparagine 1078. Cystine bridges form between cysteine 1067–cysteine 1079, cysteine 1109–cysteine 1184, cysteine 1114–cysteine 1188, and cysteine 1136–cysteine 1178. Residues glycine 1224–phenylalanine 1244 form a helical membrane-spanning segment. Cysteine 1241 carries S-palmitoyl cysteine; by host lipidation. Residues serine 1245–histidine 1247 lie on the Cytoplasmic side of the membrane.

Homodimer. Homomultimer. Interacts with host karyopherin KPNA4; this interaction allows the nuclear import of the viral capsid protein. Interacts with spike glycoprotein E2. Interacts with host IRAK1; the interaction leads to inhibition of IRAK1-dependent signaling. In terms of assembly, the precursor of protein E3/E2 and E1 form a heterodimer shortly after synthesis. As to quaternary structure, the precursor of protein E3/E2 and E1 form a heterodimer shortly after synthesis. Processing of the precursor of protein E3/E2 into E2 and E3 results in a heterodimer of the spike glycoproteins E2 and E1. Spike at virion surface are constituted of three E2-E1 heterodimers. After target cell attachment and endocytosis, E1 change conformation to form homotrimers. Interacts with 6K protein. Interacts with spike glycoprotein E1. Processing of the precursor of protein E3/E2 into E2 and E3 results in a heterodimer of the spike glycoproteins E2 and E1. Spike at virion surface are constituted of a trimer of E2-E1 heterodimers. Interacts with 6K protein. Interacts with host MXRA8; this interaction mediates virus entry. In terms of assembly, oligomer. Interacts with spike glycoprotein E1. Interacts with spike glycoprotein E2. Structural polyprotein: Specific enzymatic cleavages in vivo yield mature proteins. Capsid protein is auto-cleaved during polyprotein translation, unmasking a signal peptide at the N-terminus of the precursor of E3/E2. The remaining polyprotein is then targeted to the host endoplasmic reticulum, where host signal peptidase cleaves it into pE2, 6K and E1 proteins. pE2 is further processed to mature E3 and E2 by host furin in trans-Golgi vesicle. Post-translationally, palmitoylated via thioester bonds. These palmitoylations may induce disruption of the C-terminus transmembrane. This would result in the reorientation of E2 C-terminus from lumenal to cytoplasmic side. In terms of processing, N-glycosylated. Palmitoylated via thioester bonds.

The protein localises to the virion. It localises to the host cytoplasm. The protein resides in the host cell membrane. Its subcellular location is the host nucleus. It is found in the virion membrane. The protein localises to the host Golgi apparatus. It localises to the host trans-Golgi network. The protein resides in the host endoplasmic reticulum. It catalyses the reaction Autocatalytic release of the core protein from the N-terminus of the togavirus structural polyprotein by hydrolysis of a -Trp-|-Ser- bond.. In terms of biological role, forms an icosahedral capsid with a T=4 symmetry composed of 240 copies of the capsid protein surrounded by a lipid membrane through which penetrate 80 spikes composed of trimers of E1-E2 heterodimers. The capsid protein binds to the viral RNA genome at a site adjacent to a ribosome binding site for viral genome translation following genome release. Possesses a protease activity that results in its autocatalytic cleavage from the nascent structural protein. Following its self-cleavage, the capsid protein transiently associates with ribosomes, and within several minutes the protein binds to viral RNA and rapidly assembles into icosahedric core particles. The resulting nucleocapsid eventually associates with the cytoplasmic domain of the spike glycoprotein E2 at the cell membrane, leading to budding and formation of mature virions. In case of infection, new virions attach to target cells and after clathrin-mediated endocytosis their membrane fuses with the host endosomal membrane. This leads to the release of the nucleocapsid into the cytoplasm, followed by an uncoating event necessary for the genomic RNA to become accessible. The uncoating might be triggered by the interaction of capsid proteins with ribosomes. Binding of ribosomes would release the genomic RNA since the same region is genomic RNA-binding and ribosome-binding. Specifically inhibits interleukin-1 receptor-associated kinase 1/IRAK1-dependent signaling during viral entry, representing a means by which the alphaviruses may evade innate immune detection and activation prior to viral gene expression. Functionally, provides the signal sequence for the translocation of the precursor of protein E3/E2 to the host endoplasmic reticulum. Furin-cleaved E3 remains associated with spike glycoprotein E1 and mediates pH protection of the latter during the transport via the secretory pathway. After virion release from the host cell, the assembly protein E3 is gradually released in the extracellular space. Plays a role in viral attachment to target host cell, by binding to the cell receptor MXRA8. Synthesized as a p62 precursor which is processed by furin at the cell membrane just before virion budding, giving rise to E2-E1 heterodimer. The p62-E1 heterodimer is stable, whereas E2-E1 is unstable and dissociate at low pH. p62 is processed at the last step, presumably to avoid E1 fusion activation before its final export to cell surface. E2 C-terminus contains a transitory transmembrane that would be disrupted by palmitoylation, resulting in reorientation of the C-terminal tail from lumenal to cytoplasmic side. This step is critical since E2 C-terminus is involved in budding by interacting with capsid proteins. This release of E2 C-terminus in cytoplasm occurs lately in protein export, and precludes premature assembly of particles at the endoplasmic reticulum membrane. Its function is as follows. Acts as a viroporin that participates in virus glycoprotein processing and transport to the plasma membrane, cell permeabilization and budding of viral particles. Disrupts the calcium homeostasis of the cell, probably at the endoplasmic reticulum level. This leads to cytoplasmic calcium elevation. Because of its lipophilic properties, the 6K protein is postulated to influence the selection of lipids that interact with the transmembrane domains of the glycoproteins, which, in turn, affects the deformability of the bilayer required for the extreme curvature that occurs as budding proceeds. Present in low amount in virions, about 3% compared to viral glycoproteins. In terms of biological role, class II viral fusion protein. Fusion activity is inactive as long as E1 is bound to E2 in mature virion. After virus attachment to target cell via host MXRA8 and endocytosis, acidification of the endosome induce dissociation of E1/E2 heterodimer and concomitant trimerization of the E1 subunits. This E1 trimer is fusion active, and promotes release of viral nucleocapsid in cytoplasm after endosome and viral membrane fusion. Efficient fusion requires the presence of cholesterol and sphingolipid in the target membrane. This Anopheles (Human) protein is Structural polyprotein.